Consider the following 379-residue polypeptide: tRNA 2-selenouridine synthase (379 aa).

The 124-residue stretch at 15–138 (FQQNIPLMDV…ARNYLIKQIE (124 aa)) folds into the Rhodanese domain. Residue C98 is the S-selanylcysteine intermediate of the active site.

It belongs to the SelU family. Monomer.

The enzyme catalyses 5-methylaminomethyl-2-thiouridine(34) in tRNA + selenophosphate + (2E)-geranyl diphosphate + H2O + H(+) = 5-methylaminomethyl-2-selenouridine(34) in tRNA + (2E)-thiogeraniol + phosphate + diphosphate. It catalyses the reaction 5-methylaminomethyl-2-thiouridine(34) in tRNA + (2E)-geranyl diphosphate = 5-methylaminomethyl-S-(2E)-geranyl-thiouridine(34) in tRNA + diphosphate. It carries out the reaction 5-methylaminomethyl-S-(2E)-geranyl-thiouridine(34) in tRNA + selenophosphate + H(+) = 5-methylaminomethyl-2-(Se-phospho)selenouridine(34) in tRNA + (2E)-thiogeraniol. The catalysed reaction is 5-methylaminomethyl-2-(Se-phospho)selenouridine(34) in tRNA + H2O = 5-methylaminomethyl-2-selenouridine(34) in tRNA + phosphate. In terms of biological role, involved in the post-transcriptional modification of the uridine at the wobble position (U34) of tRNA(Lys), tRNA(Glu) and tRNA(Gln). Catalyzes the conversion of 2-thiouridine (S2U-RNA) to 2-selenouridine (Se2U-RNA). Acts in a two-step process involving geranylation of 2-thiouridine (S2U) to S-geranyl-2-thiouridine (geS2U) and subsequent selenation of the latter derivative to 2-selenouridine (Se2U) in the tRNA chain. The chain is tRNA 2-selenouridine synthase from Bdellovibrio bacteriovorus (strain ATCC 15356 / DSM 50701 / NCIMB 9529 / HD100).